We begin with the raw amino-acid sequence, 196 residues long: Large ribosomal subunit protein uL14my (196 aa).

The N-terminal 62 residues, 1–62 (MATALASKLS…TILKCVDNSC (62 aa)), are a transit peptide targeting the mitochondrion. Residues 148-175 (EKKGQNNSHGSKRKMEYNQPTGTRVFGP) form a disordered region.

The protein belongs to the universal ribosomal protein uL14 family. In terms of assembly, part of the mitochondrial 50S ribosomal subunit. Mostly expressed in pistils and inflorescences, including floral organs and meristems, and, to a lower extent, in leaves.

The protein localises to the mitochondrion. Its function is as follows. Binds to 23S rRNA in mitochondrion. Required for the formation of the proximal region of the ovule primordium during floral organogenesis, thus participating in patterning and growth of ovule. Also regulates the initiation and/or maintenance of integument and embryo sac ontogenesis. Prevents inappropriate cell death in the young ovule. This chain is Large ribosomal subunit protein uL14my (HLL), found in Arabidopsis thaliana (Mouse-ear cress).